Reading from the N-terminus, the 470-residue chain is Mucin-like protein 3 (470 aa).

The signal sequence occupies residues 1 to 29 (MAQMTSGLYPMFGFFICLLFLPASWEAGA). Residues 30–401 (NTFQELQKTG…EGSNSFPAWA (372 aa)) lie on the Extracellular side of the membrane. Disordered stretches follow at residues 57-234 (RALS…HTIP) and 248-318 (TKEA…KAPE). A compositionally biased stretch (polar residues) spans 75-87 (STATQKPKRQCNT). N-linked (GlcNAc...) asparagine glycosylation is present at Asn-122. The span at 132 to 152 (ARNERSADDHGSTNSEKRSDG) shows a compositional bias: basic and acidic residues. Residues 169–193 (TRTSGTPVSSTETSTKLRTTSQKPE) show a composition bias toward polar residues. The segment covering 194-203 (TSSHDSDLIR) has biased composition (basic and acidic residues). Positions 204–222 (KSTSLPVKSTEVSRTSYRT) are enriched in polar residues. Over residues 260–273 (KYERETRSASERIS) the composition is skewed to basic and acidic residues. The span at 283–295 (HTPSAGETTTQVS) shows a compositional bias: polar residues. An N-linked (GlcNAc...) asparagine glycan is attached at Asn-325. The helical transmembrane segment at 402-422 (IVVVILMAVIILLIFLGLIFL) threads the bilayer. Residues 423-470 (VSCASRARHQLTQNSEDAEPEDKGGRNSYPVYLMEQQNLNLNQISSPP) are Cytoplasmic-facing.

It is found in the cell membrane. Its subcellular location is the cytoplasm. Its function is as follows. May modulate NF-kappaB signaling and play a role in cell growth. The chain is Mucin-like protein 3 from Rattus norvegicus (Rat).